A 139-amino-acid chain; its full sequence is Ribulose bisphosphate carboxylase small subunit (139 aa).

It belongs to the RuBisCO small chain family. As to quaternary structure, heterohexadecamer of 8 large and 8 small subunits.

It localises to the plastid. It is found in the chloroplast. RuBisCO catalyzes two reactions: the carboxylation of D-ribulose 1,5-bisphosphate, the primary event in carbon dioxide fixation, as well as the oxidative fragmentation of the pentose substrate in the photorespiration process. Both reactions occur simultaneously and in competition at the same active site. Although the small subunit is not catalytic it is essential for maximal activity. The polypeptide is Ribulose bisphosphate carboxylase small subunit (Pylaiella littoralis (Seaweed)).